The following is a 164-amino-acid chain: Arginine repressor (164 aa).

This sequence belongs to the ArgR family.

The protein resides in the cytoplasm. Its pathway is amino-acid biosynthesis; L-arginine biosynthesis [regulation]. Functionally, regulates arginine biosynthesis genes. The protein is Arginine repressor of Thermus thermophilus (strain ATCC BAA-163 / DSM 7039 / HB27).